We begin with the raw amino-acid sequence, 80 residues long: U-actitoxin-Avd9a (80 aa).

The signal sequence occupies residues 1–20; the sequence is MNLKVLAVFVLCAILVVVTA. The propeptide occupies 21–39; sequence ERRGTETGVYKKDTLQDLI. The region spanning 45–80 is the ShKT domain; that stretch reads CIDRFPTGTCKQVKKGGSCKNSDKYRMNCRKTCGLC. Intrachain disulfides connect Cys-45–Cys-80, Cys-54–Cys-73, and Cys-63–Cys-77. The interval 68-69 is crucial for binding to potassium channels; that stretch reads KY.

The protein belongs to the sea anemone type 1 potassium channel toxin family. Type 1b subfamily.

The protein localises to the secreted. The protein resides in the nematocyst. Its function is as follows. Inhibits voltage-gated potassium channels (Kv1/KCNA). The chain is U-actitoxin-Avd9a from Anemonia viridis (Snakelocks anemone).